Reading from the N-terminus, the 366-residue chain is L-idonate 5-dehydrogenase (366 aa).

The Zn(2+) site is built by cysteine 56, histidine 81, cysteine 111, cysteine 114, cysteine 117, cysteine 125, and glutamate 167.

The protein belongs to the zinc-containing alcohol dehydrogenase family. Zn(2+) serves as cofactor.

The enzyme catalyses L-idonate + NAD(+) = 5-dehydro-D-gluconate + NADH + H(+). The protein operates within carbohydrate acid metabolism; L-idonate degradation. Its function is as follows. Involved in the catabolism of ascorbate to tartrate. The enzyme has no activity with NADP(+). In Vitis vinifera (Grape), this protein is L-idonate 5-dehydrogenase.